A 201-amino-acid polypeptide reads, in one-letter code: MNHKEILDQLVPIVIEQTPRGERAYDIYSRLLQDRIVLLGSPIDDHVANLIVAQLLFLESQDPDKDIYLYINSPGGSVTAGLAIYDTMQYIKPDVVTICMGQAASMGAILLAAGAPGKRYALPHSRIMIHQPLGGIQGQATDIIIHAEEIKRIKEMLIDILAKHTGQPKDKIANDIERDYFMSPYEAKDYGLIDKVIEKRE.

The active-site Nucleophile is serine 105. The active site involves histidine 130.

It belongs to the peptidase S14 family. In terms of assembly, fourteen ClpP subunits assemble into 2 heptameric rings which stack back to back to give a disk-like structure with a central cavity, resembling the structure of eukaryotic proteasomes.

Its subcellular location is the cytoplasm. The enzyme catalyses Hydrolysis of proteins to small peptides in the presence of ATP and magnesium. alpha-casein is the usual test substrate. In the absence of ATP, only oligopeptides shorter than five residues are hydrolyzed (such as succinyl-Leu-Tyr-|-NHMec, and Leu-Tyr-Leu-|-Tyr-Trp, in which cleavage of the -Tyr-|-Leu- and -Tyr-|-Trp bonds also occurs).. Functionally, cleaves peptides in various proteins in a process that requires ATP hydrolysis. Has a chymotrypsin-like activity. Plays a major role in the degradation of misfolded proteins. The polypeptide is ATP-dependent Clp protease proteolytic subunit (Aquifex aeolicus (strain VF5)).